A 141-amino-acid chain; its full sequence is ATP synthase epsilon chain (141 aa).

This sequence belongs to the ATPase epsilon chain family. F-type ATPases have 2 components, CF(1) - the catalytic core - and CF(0) - the membrane proton channel. CF(1) has five subunits: alpha(3), beta(3), gamma(1), delta(1), epsilon(1). CF(0) has three main subunits: a, b and c.

The protein localises to the cell inner membrane. Produces ATP from ADP in the presence of a proton gradient across the membrane. The polypeptide is ATP synthase epsilon chain (Dechloromonas aromatica (strain RCB)).